The primary structure comprises 227 residues: MELVFIRHGFSEWNAKNLFTGWRDVNLTERGVEEAKAAGKKLLDKGYEFDIAFTSVLTRAIKTCNIVLEESHQLWIPQVKNWRLNERHYGALQGLDKKATAEQYGDEQVHIWRRSYDISPPDLDPQDPNSAHNDRRYANIPSDVVPNAENLKLTLERALPFWEDQIAPAMLSGKRVLVVAHGNSLRALAKHIIGISDAEIMDFEIPTGQPLVLKLDDKLNYVEHYYL.

Residues 7 to 14 (RHGFSEWN), 20 to 21 (TG), Arg-59, 86 to 89 (ERHY), Lys-97, 113 to 114 (RR), and 182 to 183 (GN) contribute to the substrate site. His-8 functions as the Tele-phosphohistidine intermediate in the catalytic mechanism. The active-site Proton donor/acceptor is Glu-86.

The protein belongs to the phosphoglycerate mutase family. BPG-dependent PGAM subfamily. In terms of assembly, homodimer.

It carries out the reaction (2R)-2-phosphoglycerate = (2R)-3-phosphoglycerate. It participates in carbohydrate degradation; glycolysis; pyruvate from D-glyceraldehyde 3-phosphate: step 3/5. Functionally, catalyzes the interconversion of 2-phosphoglycerate and 3-phosphoglycerate. The protein is 2,3-bisphosphoglycerate-dependent phosphoglycerate mutase of Haemophilus influenzae (strain 86-028NP).